Here is a 271-residue protein sequence, read N- to C-terminus: Plasmanylethanolamine desaturase 1 (271 aa).

3 helical membrane-spanning segments follow: residues 48–68, 75–95, and 162–182; these read WCCV…LLLL, PLVM…SGLV, and VLEQ…FGTF. A Histidine box-1 motif is present at residues 187 to 191; it reads HKWSH. The Histidine box-2 signature appears at 214 to 218; that stretch reads HHRIH.

Belongs to the fatty acid desaturase CarF family.

It localises to the endoplasmic reticulum membrane. It carries out the reaction a 1-(1,2-saturated alkyl)-2-acyl-sn-glycero-3-phosphoethanolamine + 2 Fe(II)-[cytochrome b5] + O2 + 2 H(+) = a 1-O-(1Z-alkenyl)-2-acyl-sn-glycero-3-phosphoethanolamine + 2 Fe(III)-[cytochrome b5] + 2 H2O. The catalysed reaction is a 1-O-hexadecyl-2-acyl-sn-glycero-3-phosphoethanolamine + 2 Fe(II)-[cytochrome b5] + O2 + 2 H(+) = a 1-O-(1Z-hexadecenyl)-2-acyl-sn-glycero-3-phosphoethanolamine + 2 Fe(III)-[cytochrome b5] + 2 H2O. The enzyme catalyses a 1-O-octadecyl-2-acyl-sn-glycero-3-phosphoethanolamine + 2 Fe(II)-[cytochrome b5] + O2 + 2 H(+) = a 1-O-(1Z-octadecenyl)-2-acyl-sn-glycero-3-phosphoethanolamine + 2 Fe(III)-[cytochrome b5] + 2 H2O. It catalyses the reaction a 1-O-(9Z-octadecenyl)-2-acyl-sn-glycero-3-phosphoethanolamine + 2 Fe(II)-[cytochrome b5] + O2 + 2 H(+) = a 1-O-(1Z,9Z-octadecadienyl)-2-acyl-sn-glycero-3-phosphoethanolamine + 2 Fe(III)-[cytochrome b5] + 2 H2O. It functions in the pathway lipid metabolism; fatty acid metabolism. In terms of biological role, plasmanylethanolamine desaturase involved in plasmalogen biogenesis in the endoplasmic reticulum membrane. Plasmalogens are glycerophospholipids with a hydrocarbon chain linked by a vinyl ether bond at the glycerol sn-1 position, and are involved in antioxidative and signaling mechanisms. This is Plasmanylethanolamine desaturase 1 from Bos taurus (Bovine).